The primary structure comprises 198 residues: V-type ATP synthase subunit E (198 aa).

The protein belongs to the V-ATPase E subunit family.

Functionally, produces ATP from ADP in the presence of a proton gradient across the membrane. This chain is V-type ATP synthase subunit E, found in Clostridium perfringens (strain ATCC 13124 / DSM 756 / JCM 1290 / NCIMB 6125 / NCTC 8237 / Type A).